Reading from the N-terminus, the 456-residue chain is 3-isopropylmalate dehydratase large subunit (456 aa).

[4Fe-4S] cluster-binding residues include cysteine 336, cysteine 396, and cysteine 399.

Belongs to the aconitase/IPM isomerase family. LeuC type 1 subfamily. Heterodimer of LeuC and LeuD. It depends on [4Fe-4S] cluster as a cofactor.

The enzyme catalyses (2R,3S)-3-isopropylmalate = (2S)-2-isopropylmalate. It participates in amino-acid biosynthesis; L-leucine biosynthesis; L-leucine from 3-methyl-2-oxobutanoate: step 2/4. Functionally, catalyzes the isomerization between 2-isopropylmalate and 3-isopropylmalate, via the formation of 2-isopropylmaleate. The protein is 3-isopropylmalate dehydratase large subunit of Staphylococcus saprophyticus subsp. saprophyticus (strain ATCC 15305 / DSM 20229 / NCIMB 8711 / NCTC 7292 / S-41).